Reading from the N-terminus, the 442-residue chain is Septin-8 (442 aa).

Positions 1–16 (MAATDLERVSSAEPEP) are enriched in basic and acidic residues. Residues 1–23 (MAATDLERVSSAEPEPRSLSLGG) form a disordered region. N-acetylalanine is present on A2. Phosphoserine is present on S10. Positions 41–307 (QGFSFNILCV…ELYRRCKLEE (267 aa)) constitute a Septin-type G domain. A G1 motif region spans residues 51-58 (GETGIGKS). Residues 51–58 (GETGIGKS), G106, 187–195 (KADTISKSE), G241, and R256 each bind GTP. The interval 103–106 (DAVG) is G3 motif. A G4 motif region spans residues 186-189 (AKAD). A coiled-coil region spans residues 322 to 410 (LQETYEAKRK…RKAAVEALQS (89 aa)). The segment covering 377-391 (HQEEKRKVEEKRREL) has biased composition (basic and acidic residues). The disordered stretch occupies residues 377-442 (HQEEKRKVEE…WSSIYSVTIP (66 aa)). Composition is skewed to polar residues over residues 408 to 420 (LQSQALHATSQQP) and 432 to 442 (GWSSIYSVTIP).

This sequence belongs to the TRAFAC class TrmE-Era-EngA-EngB-Septin-like GTPase superfamily. Septin GTPase family. In terms of assembly, septins polymerize into heterooligomeric protein complexes that form filaments, and can associate with cellular membranes, actin filaments and microtubules. GTPase activity is required for filament formation. Interacts with CDK14, SEPTIN4, SEPTIN5 and SEPTIN7. Interacts with VAMP2; the interaction inhibits interaction of VAMP2 with SYP. Interacts with STX1A.

The protein resides in the cytoplasm. Its subcellular location is the cytoskeleton. The protein localises to the synapse. It localises to the cell projection. It is found in the axon. The protein resides in the cytoplasmic vesicle. Its subcellular location is the secretory vesicle. The protein localises to the synaptic vesicle membrane. It localises to the presynapse. Its function is as follows. Filament-forming cytoskeletal GTPase. May play a role in platelet secretion. Seems to participate in the process of SNARE complex formation in synaptic vesicles. This chain is Septin-8, found in Otolemur garnettii (Small-eared galago).